A 578-amino-acid polypeptide reads, in one-letter code: Serine/threonine-protein kinase D6PKL3 (578 aa).

Over residues 1–24 (MDSSSSVVYVGSSSKSRNFQSKSK) the composition is skewed to low complexity. The tract at residues 1–64 (MDSSSSVVYV…EVIESSVSSV (64 aa)) is disordered. A compositionally biased stretch (polar residues) spans 25–34 (GSITSFSIDS). A compositionally biased stretch (low complexity) spans 53–64 (SPEVIESSVSSV). The Protein kinase domain occupies 182–516 (FKLIKKLGGG…ATEIKQHPFF (335 aa)). ATP is bound by residues 188-196 (LGGGDIGNV) and K211. D307 serves as the catalytic Proton acceptor. Positions 325 to 426 (DFDLSLRCAV…VGTHEYLAPE (102 aa)) are activation loop. A PIF motif is present at residues 575–578 (IDFF).

It belongs to the protein kinase superfamily. AGC Ser/Thr protein kinase family. In terms of tissue distribution, expressed predominantly in root tissue with lower levels found in leaf, stem, seed and flower.

The protein localises to the cell membrane. It carries out the reaction L-seryl-[protein] + ATP = O-phospho-L-seryl-[protein] + ADP + H(+). The enzyme catalyses L-threonyl-[protein] + ATP = O-phospho-L-threonyl-[protein] + ADP + H(+). Protein kinase that regulates the auxin transport activity of PIN auxin efflux facilitators by direct phosphorylation. D6PK-mediated PIN phosphorylation promotes auxin transport in the hypocotyl and this is a prerequisite for PHOT1-dependent hypocotyl bending. The chain is Serine/threonine-protein kinase D6PKL3 (D6PKL3) from Arabidopsis thaliana (Mouse-ear cress).